A 252-amino-acid chain; its full sequence is Cell division protein ZapD (252 aa).

Belongs to the ZapD family. Interacts with FtsZ.

The protein localises to the cytoplasm. In terms of biological role, cell division factor that enhances FtsZ-ring assembly. Directly interacts with FtsZ and promotes bundling of FtsZ protofilaments, with a reduction in FtsZ GTPase activity. In Ralstonia pickettii (strain 12J), this protein is Cell division protein ZapD.